Reading from the N-terminus, the 718-residue chain is Acetolactate synthase, mitochondrial (718 aa).

Disordered regions lie at residues 1 to 53 and 75 to 99; these read MLTR…YDTP and QSSA…QAAP. Residues 32–45 show a composition bias toward polar residues; the sequence is RYSNNIHTSSTQNA. Low complexity predominate over residues 76-99; that stretch reads SSASTAAASPAVRPQPAQHFQAAP. Residue glutamate 173 participates in thiamine diphosphate binding. FAD is bound at residue arginine 275. The tract at residues 301–326 is disordered; that stretch reads VQPGHSPYLPSNPLNPSSQPSDPLPG. Positions 306 to 325 are enriched in low complexity; that stretch reads SPYLPSNPLNPSSQPSDPLP. Residues 397 to 418 and 449 to 468 contribute to the FAD site; these read HGSA…LGVR and EIQP…VLGD. The thiamine pyrophosphate binding stretch occupies residues 541–621; sequence QHQMWACQYY…VKVLLFNNEF (81 aa). Residues aspartate 592 and asparagine 619 each contribute to the Mg(2+) site.

Belongs to the TPP enzyme family. Mg(2+) is required as a cofactor. Thiamine diphosphate serves as cofactor.

Its subcellular location is the mitochondrion. It catalyses the reaction 2 pyruvate + H(+) = (2S)-2-acetolactate + CO2. The protein operates within amino-acid biosynthesis; L-isoleucine biosynthesis; L-isoleucine from 2-oxobutanoate: step 1/4. Its pathway is amino-acid biosynthesis; L-valine biosynthesis; L-valine from pyruvate: step 1/4. This is Acetolactate synthase, mitochondrial (ILV2) from Cryptococcus neoformans var. grubii serotype A (strain H99 / ATCC 208821 / CBS 10515 / FGSC 9487) (Filobasidiella neoformans var. grubii).